The following is a 1224-amino-acid chain: DNA-directed RNA polymerase subunit beta' (1224 aa).

Zn(2+)-binding residues include Cys-60, Cys-62, Cys-75, and Cys-78. Residues Asp-449, Asp-451, and Asp-453 each contribute to the Mg(2+) site. Zn(2+) is bound by residues Cys-819, Cys-893, Cys-900, and Cys-903.

The protein belongs to the RNA polymerase beta' chain family. The RNAP catalytic core consists of 2 alpha, 1 beta, 1 beta' and 1 omega subunit. When a sigma factor is associated with the core the holoenzyme is formed, which can initiate transcription. The cofactor is Mg(2+). Zn(2+) serves as cofactor.

The enzyme catalyses RNA(n) + a ribonucleoside 5'-triphosphate = RNA(n+1) + diphosphate. Functionally, DNA-dependent RNA polymerase catalyzes the transcription of DNA into RNA using the four ribonucleoside triphosphates as substrates. This Lactobacillus johnsonii (strain CNCM I-12250 / La1 / NCC 533) protein is DNA-directed RNA polymerase subunit beta'.